We begin with the raw amino-acid sequence, 215 residues long: Methylthioribulose-1-phosphate dehydratase (215 aa).

Positions 103 and 105 each coordinate Zn(2+).

The protein belongs to the aldolase class II family. MtnB subfamily. Zn(2+) serves as cofactor.

The catalysed reaction is 5-(methylsulfanyl)-D-ribulose 1-phosphate = 5-methylsulfanyl-2,3-dioxopentyl phosphate + H2O. Its pathway is amino-acid biosynthesis; L-methionine biosynthesis via salvage pathway; L-methionine from S-methyl-5-thio-alpha-D-ribose 1-phosphate: step 2/6. Catalyzes the dehydration of methylthioribulose-1-phosphate (MTRu-1-P) into 2,3-diketo-5-methylthiopentyl-1-phosphate (DK-MTP-1-P). The polypeptide is Methylthioribulose-1-phosphate dehydratase (Persephonella marina (strain DSM 14350 / EX-H1)).